A 238-amino-acid polypeptide reads, in one-letter code: DNA repair protein RecO (238 aa).

This sequence belongs to the RecO family.

Involved in DNA repair and RecF pathway recombination. In Cereibacter sphaeroides (strain ATCC 17023 / DSM 158 / JCM 6121 / CCUG 31486 / LMG 2827 / NBRC 12203 / NCIMB 8253 / ATH 2.4.1.) (Rhodobacter sphaeroides), this protein is DNA repair protein RecO.